The chain runs to 1361 residues: MASFNIENPLQQLEQSGLAGVTLNDNAAPAANVIYSSLKSGGGGSTPPATTTSLGTIQLAGVLTGIATSPQLAAGSVGASQLAPGAVNASSIAPGSITGSSLAPGTITSTQLAPGSVGSSQIANGAVGSSQIANGAVGSSQIANGAVGASQIANGAIGPMQLAPLSGPSELIGSNSTSPNAMDITLGPSLQMSPAGVLSVNPSAVTVAPSTTTSLGTIQLAGVLTGTATSPQLAAGSVGASQLAPGAVTSSSIAPGSISGSSLAPGSVTSSQLAAGSVGTSQLAPLPAPSELLGSSSTSSAVTDIMLGSGLSMTGSVLSVNASTAVPPATSSSLGTVQLAGALTGSATAPSLAANSVGSSQISAGAVGATQLGANVVGNGQLAPLSGPSELIGSNSSSPAASNITLGTGLSMSSGGVLSVNASTAVPAATSSSLGTIQLAGALSGTATSPTLSAGSVGATQIVAGSVGATQLGANVVGNSQLAALSGPSELIGSASGSSDATNIILGSGLTMTGNTLNSTLGTIPIPVSQGGTGLTTIPSGSFLLGNGTSPVTTASSIPATMVTPNLVGSVNGVVPSSAGGNVAVVLGNVTTGVLSAQPAQPQPNGNIYVVSGDPTPANNGRTFISNGTTWNEVTNNIATTDARYVQLAGSTMNANANLVFPSTGHVTLNQTTFASTDAVTAQYVASQIASGSTPAATTTSLGTIQLAGSLTGTATSPSIASGVVTQTNMASNSIGSAQIIAGSVGATQLGANVVGTGQLAPLSANSELLGSNSSSPAATNITLGSGLSMTGSVLSVNASTAVPAATSSSLGTIQLAGALTGSATSPTLATGSVGATQIVAGSVGATQLGANVVGNGQLAPLSAPSELIGSNSASPNATNISLGSGLSMSSGGVLSVDASTAVPAATSSSLGTIQLSGALSGSATSPTLSAGSVGSTQIADGAVGASKIANGAVGATQIAANSVGTGQLAALSGTSQLIGSNSSSSAATNITLGTGLSMSSGGVLSATAIAPAPATSTSLGTIQLAGSLSGTATAPTIANNAIGTAQLANNAVETAQLANGAVGLSQLAPLPATSELIGSSSGSTTASAITLGSGLVMSAGGQLSVNLTGVSIPAATSSSLGGIQMLGDLTGSVATAPTVAPGAITLAKMANLSGNSQLIGSSKTSTTPTNITLGPSMSMTNSQLNGPISFLTSGNNPNTTAPSDRPAQQNTLYSGTDGSIWLYNGTNYVKINSGLTSTGSIVASLTNITFGNLVVQVGGIVNNANCSIFVMFNDSQTHQCTASLFSTYAANGSAQNIGNMYQPISGTFVGLQKVWGGGFLSQVGGMQTYVLIDQTFGKQWNISISAIASNSFFVSVLSVI.

This sequence belongs to the IIV-6 261R/396L/443R family.

This is an uncharacterized protein from Invertebrate iridescent virus 6 (IIV-6).